Reading from the N-terminus, the 509-residue chain is tRNA-2-methylthio-N(6)-dimethylallyladenosine synthase (509 aa).

Over residues 1-15 (MNEQQRLASQQANAS) the composition is skewed to polar residues. The interval 1–22 (MNEQQRLASQQANASTKKEEKD) is disordered. Residues 66–184 (RKFYIRTYGC…LPYILKDAMF (119 aa)) form the MTTase N-terminal domain. [4Fe-4S] cluster is bound by residues Cys75, Cys111, Cys145, Cys221, Cys225, and Cys228. Residues 207 to 437 (RRGDIKAWVN…NELVNEFSAK (231 aa)) form the Radical SAM core domain. Residues 440 to 503 (KKYEGQIVEV…TWSLNGELVE (64 aa)) form the TRAM domain.

This sequence belongs to the methylthiotransferase family. MiaB subfamily. In terms of assembly, monomer. Requires [4Fe-4S] cluster as cofactor.

The protein localises to the cytoplasm. It catalyses the reaction N(6)-dimethylallyladenosine(37) in tRNA + (sulfur carrier)-SH + AH2 + 2 S-adenosyl-L-methionine = 2-methylsulfanyl-N(6)-dimethylallyladenosine(37) in tRNA + (sulfur carrier)-H + 5'-deoxyadenosine + L-methionine + A + S-adenosyl-L-homocysteine + 2 H(+). Functionally, catalyzes the methylthiolation of N6-(dimethylallyl)adenosine (i(6)A), leading to the formation of 2-methylthio-N6-(dimethylallyl)adenosine (ms(2)i(6)A) at position 37 in tRNAs that read codons beginning with uridine. This chain is tRNA-2-methylthio-N(6)-dimethylallyladenosine synthase, found in Bacillus cytotoxicus (strain DSM 22905 / CIP 110041 / 391-98 / NVH 391-98).